The primary structure comprises 389 residues: Chitin-binding protein CbpD (389 aa).

An N-terminal signal peptide occupies residues 1–25; the sequence is MKHYSATLALLPLTLALFLPQAAHA. The Chitin-binding type-4 domain maps to 26–208; that stretch reads HGSMETPPSR…EAFYACIDVS (183 aa). Tyr-37 carries the phosphotyrosine modification. Position 210 is a phosphoserine (Ser-210).

It localises to the secreted. Binds but does not hydrolyze chitin. The polypeptide is Chitin-binding protein CbpD (cpbD) (Pseudomonas aeruginosa (strain UCBPP-PA14)).